The chain runs to 574 residues: Squalene monooxygenase (574 aa).

At 1–20 the chain is on the cytoplasmic side; sequence MWTFLGIATFTYFYKKFGDF. The interval 1 to 100 is interaction with MARCHF6; sequence MWTFLGIATF…EQLEARRRRK (100 aa). Residues 21–41 lie within the membrane without spanning it; the sequence is ITLANREVLLCVLVFLSLGLV. Topologically, residues 42–574 are cytoplasmic; sequence LSYRCRHRNG…IYSEMKYMVH (533 aa). Residues 62-73 form a required for degradation in response to high membrane cholesterol levels region; it reads QFALFSDILSGL. The segment at 118 to 574 is sufficient for enzyme activity; the sequence is TSSQNDPEVI…IYSEMKYMVH (457 aa). Residues 133–134, 153–154, Arg-161, Phe-166, Arg-234, Val-250, Asp-408, and Met-421 contribute to the FAD site; these read VL and ER. The segment at 516-574 is hydrophobic; mediates interaction with membranes; that stretch reads PLVLIGHFFAVAIYAVYFCFKSEPWITKPRALLSSGAVLYKACSVIFPLIYSEMKYMVH.

Belongs to the squalene monooxygenase family. As to quaternary structure, interacts (via N-terminal domain) with MARCHF6. Interacts with SMIM22; this interaction modulates lipid droplet formation. FAD serves as cofactor. Post-translationally, ubiquitinated by MARCHF6 in response to high cholesterol levels in intracellular membranes, leading to proteasomal degradation. In terms of tissue distribution, detected in liver (at protein level).

It is found in the microsome membrane. The protein localises to the endoplasmic reticulum membrane. The enzyme catalyses squalene + reduced [NADPH--hemoprotein reductase] + O2 = (S)-2,3-epoxysqualene + oxidized [NADPH--hemoprotein reductase] + H2O + H(+). Its pathway is terpene metabolism; lanosterol biosynthesis; lanosterol from farnesyl diphosphate: step 2/3. Inhibited by NB-598 ((E)N-ethyl-N-(6,6-dimethyl-2-hepten-4-ynyl)-3-[(3,3'-bi-thiophen-5-yl)methoxy]benzene-methanamine). Contrary to fungal enzymes, the mammalian enzyme is only slightly inhibited by terbinafine. Inhibited by tellurite, tellurium dioxide, selenite, and selenium dioxide. Catalyzes the stereospecific oxidation of squalene to (S)-2,3-epoxysqualene, and is considered to be a rate-limiting enzyme in steroid biosynthesis. This chain is Squalene monooxygenase (SQLE), found in Homo sapiens (Human).